A 145-amino-acid polypeptide reads, in one-letter code: D-aminoacyl-tRNA deacylase (145 aa).

Positions 137-138 (GP) match the Gly-cisPro motif, important for rejection of L-amino acids motif.

This sequence belongs to the DTD family. Homodimer.

The protein localises to the cytoplasm. It catalyses the reaction glycyl-tRNA(Ala) + H2O = tRNA(Ala) + glycine + H(+). It carries out the reaction a D-aminoacyl-tRNA + H2O = a tRNA + a D-alpha-amino acid + H(+). Functionally, an aminoacyl-tRNA editing enzyme that deacylates mischarged D-aminoacyl-tRNAs. Also deacylates mischarged glycyl-tRNA(Ala), protecting cells against glycine mischarging by AlaRS. Acts via tRNA-based rather than protein-based catalysis; rejects L-amino acids rather than detecting D-amino acids in the active site. By recycling D-aminoacyl-tRNA to D-amino acids and free tRNA molecules, this enzyme counteracts the toxicity associated with the formation of D-aminoacyl-tRNA entities in vivo and helps enforce protein L-homochirality. This is D-aminoacyl-tRNA deacylase from Pseudoalteromonas atlantica (strain T6c / ATCC BAA-1087).